A 300-amino-acid polypeptide reads, in one-letter code: MAQKVEAGGGAGGASWDDGVHDGVRKVHVGQGQDGVSSINVVYAKDSQDVEGGEHGKKTLLGFETFEVDADDYIVAVQVTYDNVFGQDSDIITSITFNTFKGKTSPPYGLETQKKFVLKDKNGGKLVGFHGRAGEALYALGAYFATTTTPVTPAKKLSAIGGDEGTAWDDGAYDGVKKVYVGQGQDGISAVKFEYNKGAENIVGGEHGKPTLLGFEEFEIDYPSEYITAVEGTYDKIFGSDGLIITMLRFKTNKQTSAPFGLEAGTAFELKEEGHKIVGFHGKASELLHQFGVHVMPLTN.

A disordered region spans residues 1–20 (MAQKVEAGGGAGGASWDDGV). An N-acetylalanine modification is found at Ala-2. Jacalin-type lectin domains lie at 2–146 (AQKV…YFAT) and 154–297 (AKKL…HVMP).

The protein belongs to the jacalin lectin family. In terms of assembly, component of the PYK10 complex, at least composed of PYK10/BGLU23, BGLU21, BGLU22, JAL22, JAL23, PBP1/JAL30, PBP2/JAL31, JAL32, JAL33, JAL34, JAL35, GLL22 and GLL23.

Functionally, sugar-binding protein showing significant affinity for (Glc alpha(1-4)Glc)(3) maltohexaose, (Glc alpha(1-6)Glc)(3) isomaltohexaose, Gal alpha(1-4)Gal beta(1-4)Glc, GalNAc alpha(1-3)(Fuc alpha(1-2)) and Gal beta(1-3)(Fuc alpha(1-4))GlcNAc beta(1-3)Gal beta(1-4)Glc. The polypeptide is Jacalin-related lectin 33 (JAL33) (Arabidopsis thaliana (Mouse-ear cress)).